A 403-amino-acid polypeptide reads, in one-letter code: Large ribosomal subunit protein uL3 (403 aa).

The segment at 1 to 38 (MSHRKFSAPRHGSLGFLPRKRSSRHRGKVKSFPKDDSS) is disordered. Serine 13 bears the Phosphoserine mark. Positions 18 to 31 (PRKRSSRHRGKVKS) are enriched in basic residues. Lysine 39 is covalently cross-linked (Glycyl lysine isopeptide (Lys-Gly) (interchain with G-Cter in SUMO2)). Residue lysine 136 is modified to N6-acetyllysine. Glycyl lysine isopeptide (Lys-Gly) (interchain with G-Cter in SUMO2) cross-links involve residues lysine 224 and lysine 226. Tele-methylhistidine is present on histidine 245. An N6-acetyllysine; alternate mark is found at lysine 286 and lysine 294. Lysine 286 is covalently cross-linked (Glycyl lysine isopeptide (Lys-Gly) (interchain with G-Cter in SUMO2); alternate). A Glycyl lysine isopeptide (Lys-Gly) (interchain with G-Cter in SUMO1); alternate cross-link involves residue lysine 294. Position 304 is a phosphoserine (serine 304). Lysine 366 carries the N6-acetyllysine; alternate modification. A Glycyl lysine isopeptide (Lys-Gly) (interchain with G-Cter in SUMO2); alternate cross-link involves residue lysine 366. The residue at position 373 (lysine 373) is an N6-acetyllysine. Glycyl lysine isopeptide (Lys-Gly) (interchain with G-Cter in SUMO2) cross-links involve residues lysine 386, lysine 393, and lysine 399.

The protein belongs to the universal ribosomal protein uL3 family. In terms of assembly, component of the large ribosomal subunit. Interacts with DHX33. Constitutively monomethylated at His-245 by METTL18. Methylation at His-245 regulates translation elongation by slowing ribosome traversal on tyrosine codons: slower elongation provides enough time for proper folding of synthesized proteins and prevents cellular aggregation of tyrosine-rich proteins It is not required for incorporation of RPL3 into ribosomes.

Its subcellular location is the nucleus. It is found in the nucleolus. It localises to the cytoplasm. Component of the large ribosomal subunit. The ribosome is a large ribonucleoprotein complex responsible for the synthesis of proteins in the cell. In Bos taurus (Bovine), this protein is Large ribosomal subunit protein uL3 (RPL3).